A 553-amino-acid chain; its full sequence is Urocanate hydratase (553 aa).

NAD(+) is bound by residues Gly-45 to Gly-46, Gln-123, Gly-169 to Gly-171, Asp-189, Arg-194, Asn-235 to Ala-236, Gln-256 to His-260, Tyr-266 to Val-267, Tyr-315, and Gly-485.

This sequence belongs to the urocanase family. NAD(+) serves as cofactor.

It localises to the cytoplasm. The catalysed reaction is 4-imidazolone-5-propanoate = trans-urocanate + H2O. The protein operates within amino-acid degradation; L-histidine degradation into L-glutamate; N-formimidoyl-L-glutamate from L-histidine: step 2/3. Functionally, catalyzes the conversion of urocanate to 4-imidazolone-5-propionate. This Staphylococcus aureus (strain COL) protein is Urocanate hydratase.